A 166-amino-acid chain; its full sequence is MASKKLNLSLIEESVNKYDKKEKVQLTDDVHVFIYPYFSPSRLTKMLTEMISDQQKAEDKGIDFSKINTVQWVFFSIVKEFSDLGIPNDIKNKVKWYLKLVDSEFFPMIINSFPKESMKKLKDATKALEKITEDLLTMSHQEINKLILEKVEEIETGSGEVSGENN.

The chain is SPbeta prophage-derived uncharacterized protein YomO (yomO) from Bacillus subtilis (strain 168).